The primary structure comprises 305 residues: Protoheme IX farnesyltransferase (305 aa).

The next 9 membrane-spanning stretches (helical) occupy residues 31 to 51 (VISLVIFTGFVGMWLAPYSVH), 52 to 72 (PFIAGIAVVCIALGAGSAGAI), 96 to 118 (VIESDEALSFGLITGFFAVFFMA), 123 to 145 (LLASFLLLFTIFYYICIYTIWLK), 151 to 171 (NIVIGGVSGALPPVIGYAAVS), 179 to 199 (IILFLIIFIWTPPHSWALALF), 225 to 245 (ILIYSILLFIVSLMPFFIGMN), 247 to 267 (FIYLIIAGILGVVFLYYAGSL), and 281 to 301 (FAYSIFYLFFIFLLLYSTNTI).

This sequence belongs to the UbiA prenyltransferase family. Protoheme IX farnesyltransferase subfamily.

The protein localises to the cell inner membrane. It catalyses the reaction heme b + (2E,6E)-farnesyl diphosphate + H2O = Fe(II)-heme o + diphosphate. Its pathway is porphyrin-containing compound metabolism; heme O biosynthesis; heme O from protoheme: step 1/1. Functionally, converts heme B (protoheme IX) to heme O by substitution of the vinyl group on carbon 2 of heme B porphyrin ring with a hydroxyethyl farnesyl side group. This is Protoheme IX farnesyltransferase from Rickettsia massiliae (strain Mtu5).